The chain runs to 84 residues: Sulfur carrier protein TusA (84 aa).

The active-site Cysteine persulfide intermediate is C19.

The protein belongs to the sulfur carrier protein TusA family. As to quaternary structure, interacts with IscS.

It is found in the cytoplasm. It participates in tRNA modification. Its function is as follows. Sulfur carrier protein involved in sulfur trafficking in the cell. Part of a sulfur-relay system required for 2-thiolation during synthesis of 2-thiouridine of the modified wobble base 5-methylaminomethyl-2-thiouridine (mnm(5)s(2)U) in tRNA. Interacts with IscS and stimulates its cysteine desulfurase activity. Accepts an activated sulfur from IscS, which is then transferred to TusD, and thus determines the direction of sulfur flow from IscS to 2-thiouridine formation. Also appears to be involved in sulfur transfer for the biosynthesis of molybdopterin. The chain is Sulfur carrier protein TusA from Photorhabdus laumondii subsp. laumondii (strain DSM 15139 / CIP 105565 / TT01) (Photorhabdus luminescens subsp. laumondii).